The chain runs to 189 residues: uncharacterized protein (189 aa).

The stretch at 31 to 54 (KCENIDDLANRYEVSKQEVEKVFK) forms a coiled coil. 4 consecutive EF-hand domains span residues 47–82 (QEVEKVFKIFQLMDDDGSGTISSSEVAKMLNELGID), 83–118 (VSPKVVQAVMRSSDVSGDGQIDFEEFLAAVTSKIKL), 120–155 (TVKADVQLMLSKIDNNPEKVISAEELVVAWSETVST), and 157–189 (ITVKEACALIQQADTQGRGKATIHEFITMCQTV). Positions 60, 62, 64, 66, 71, 96, 98, 100, 102, 107, 133, 135, 137, and 144 each coordinate Ca(2+).

This is an uncharacterized protein from Caenorhabditis elegans.